Consider the following 966-residue polypeptide: Alpha-1,4 glucan phosphorylase L-1 isozyme, chloroplastic/amyloplastic (966 aa).

A chloroplast-targeting transit peptide spans 1 to 50 (MATANGAHLFNHYSSNSRFIHFTSRNTSSKLFLTKTSHFRRPKRCFHVNN). An N6-(pyridoxal phosphate)lysine modification is found at Lys-812.

The protein belongs to the glycogen phosphorylase family. Requires pyridoxal 5'-phosphate as cofactor. As to expression, tuber.

It localises to the plastid. The protein resides in the chloroplast. It is found in the amyloplast. The enzyme catalyses [(1-&gt;4)-alpha-D-glucosyl](n) + phosphate = [(1-&gt;4)-alpha-D-glucosyl](n-1) + alpha-D-glucose 1-phosphate. Its function is as follows. Phosphorylase is an important allosteric enzyme in carbohydrate metabolism. Enzymes from different sources differ in their regulatory mechanisms and in their natural substrates. However, all known phosphorylases share catalytic and structural properties. The sequence is that of Alpha-1,4 glucan phosphorylase L-1 isozyme, chloroplastic/amyloplastic from Solanum tuberosum (Potato).